The following is an 800-amino-acid chain: Putative antiporter subunit mnhA2 (800 aa).

20 helical membrane-spanning segments follow: residues 1–21 (MSLV…LLMS), 33–53 (IALV…PSVA), 78–98 (GLSL…FFYA), 118–138 (LFMF…MYIF), 167–187 (FMIT…LYIM), 207–227 (GLFI…SAQF), 241–261 (TPVS…FLLL), 273–293 (YIYI…ITAL), 300–320 (GILA…VGIG), 331–351 (IASI…NHAI), 387–407 (LVMT…GFLS), 424–444 (FSLI…IFTF), 472–492 (PWLF…IFFV), 527–547 (GFNI…VLAI), 595–615 (IIMT…RIGL), 627–647 (GALE…LIFI), 651–671 (LTMV…FIAM), 676–696 (LALT…VSFS), 712–732 (IIKI…IFIT), and 768–788 (LDTL…YTLL).

The protein belongs to the CPA3 antiporters (TC 2.A.63) subunit A family. As to quaternary structure, may form a heterooligomeric complex that consists of seven subunits: mnhA2, mnhB2, mnhC2, mnhD2, mnhE2, mnhF2 and mnhG2.

It localises to the cell membrane. This chain is Putative antiporter subunit mnhA2 (mnhA2), found in Staphylococcus aureus (strain Mu3 / ATCC 700698).